We begin with the raw amino-acid sequence, 1774 residues long: 6-methylsalicylic acid synthase (1774 aa).

The segment covering 1-14 (MHSAATSTYPSGKT) has biased composition (polar residues). Residues 1-21 (MHSAATSTYPSGKTSPAPVGT) are disordered. In terms of domain architecture, Ketosynthase family 3 (KS3) spans 32–457 (SNDVAVVGMA…GTVSHAVIEE (426 aa)). Residues 186 to 238 (RISYHLNLMGPSTAVDAACASSLVAIHHGVQAIRLGESKVAIVGGVNALCGPG) are acyltransferase. Active-site for beta-ketoacyl synthase activity residues include Cys204, His339, and His379. Residues 642-676 (NGITPQAVIGHSVGEIAASVVAGALSPAEGALIVT) are acetyl/malonyl transferases. Ser653 serves as the catalytic For malonyltransferase activity. An N-terminal hotdog fold region spans residues 926 to 1045 (HTLLGQRIPV…AYWDRKVAGS (120 aa)). Residues 926–1202 (HTLLGQRIPV…FSEIEGTPGV (277 aa)) enclose the PKS/mFAS DH domain. Residue His958 is the Proton acceptor; for dehydratase activity of the active site. Residues 1059–1202 (VTKLADNFSI…FSEIEGTPGV (144 aa)) form a C-terminal hotdog fold region. The active-site Proton donor; for dehydratase activity is the Asp1123. Residues 1403-1450 (GPRLLPRPEGTYLITGGLGVLGLEVADFLVEKGARRLLLISRRALPPR) form a 2-oxoacyl reductase region. An NADP(+)-binding site is contributed by 1419–1424 (GLGVLG). Residues 1698-1772 (AYLDEKIRGC…HLAVWFAEKL (75 aa)) form the Carrier domain. The residue at position 1732 (Ser1732) is an O-(pantetheine 4'-phosphoryl)serine.

Homomultimer.

The catalysed reaction is 3 malonyl-CoA + acetyl-CoA + NADPH + 3 H(+) = 6-methylsalicylate + 3 CO2 + NADP(+) + 4 CoA + H2O. Its pathway is mycotoxin biosynthesis; patulin biosynthesis. Its function is as follows. This multifunctional enzyme is a polyketide synthase. It catalyzes a total of 11 steps by seven different component enzymes, in the biosynthesis of the antibiotic patulin. In Penicillium patulum (Penicillium griseofulvum), this protein is 6-methylsalicylic acid synthase.